The following is a 234-amino-acid chain: Sugar fermentation stimulation protein homolog (234 aa).

The protein belongs to the SfsA family.

This chain is Sugar fermentation stimulation protein homolog, found in Edwardsiella ictaluri (strain 93-146).